The following is a 791-amino-acid chain: Diacylglycerol kinase gamma (791 aa).

2 disordered regions span residues 82–103 (KPRH…ANSA) and 117–154 (DEAC…SSSS). Residues 83–92 (PRHETSDHPT) show a composition bias toward basic and acidic residues. Positions 94–103 (GASNSEANSA) are enriched in polar residues. 2 EF-hand domains span residues 175–210 (RPQD…MLHI) and 220–255 (ELRP…TIPL). The Ca(2+) site is built by aspartate 188, aspartate 190, asparagine 192, glutamate 199, aspartate 233, aspartate 235, aspartate 237, and glutamate 244. 2 Phorbol-ester/DAG-type zinc fingers span residues 271 to 321 (RHAW…IPGC) and 336 to 385 (QHAW…LCDG). In terms of domain architecture, DAGKc spans 430-564 (PGTHPLLVLV…LDRWHLEVIP (135 aa)). A disordered region spans residues 768-791 (APMMMGPPQKSSFFSLRRKSRSKD).

It belongs to the eukaryotic diacylglycerol kinase family. As to expression, predominantly expressed in retina and in a much lesser extent in the brain. Other tissues contain extremely low levels of DGK-gamma.

It is found in the membrane. Its subcellular location is the cytoplasm. The protein resides in the cytosol. The protein localises to the cytoskeleton. The enzyme catalyses a 1,2-diacyl-sn-glycerol + ATP = a 1,2-diacyl-sn-glycero-3-phosphate + ADP + H(+). The catalysed reaction is 1,2-didecanoyl-sn-glycerol + ATP = 1,2-didecanoyl-sn-glycero-3-phosphate + ADP + H(+). It carries out the reaction 1-octadecanoyl-2-(5Z,8Z,11Z,14Z-eicosatetraenoyl)-sn-glycerol + ATP = 1-octadecanoyl-2-(5Z,8Z,11Z,14Z-eicosatetraenoyl)-sn-glycero-3-phosphate + ADP + H(+). It catalyses the reaction 1,2-di-(9Z-octadecenoyl)-sn-glycerol + ATP = 1,2-di-(9Z-octadecenoyl)-sn-glycero-3-phosphate + ADP + H(+). The enzyme catalyses 1-octadecanoyl-2-(9Z,12Z)-octadecadienoyl-sn-glycerol + ATP = 1-octadecanoyl-2-(9Z,12Z-octadecadienoyl)-sn-glycero-3-phosphate + ADP + H(+). The protein operates within lipid metabolism; glycerolipid metabolism. The activity is calcium-dependent. Requires phosphatidylserine for maximal activity. Functionally, diacylglycerol kinase that converts diacylglycerol/DAG into phosphatidic acid/phosphatidate/PA and regulates the respective levels of these two bioactive lipids. Thereby, acts as a central switch between the signaling pathways activated by these second messengers with different cellular targets and opposite effects in numerous biological processes. Has no apparent specificity with regard to the acyl compositions of diacylglycerol. Specifically expressed in the cerebellum where it controls the level of diacylglycerol which in turn regulates the activity of protein kinase C gamma. Through protein kinase C gamma, indirectly regulates the dendritic development of Purkinje cells, cerebellar long term depression and ultimately cerebellar motor coordination. The polypeptide is Diacylglycerol kinase gamma (DGKG) (Homo sapiens (Human)).